A 681-amino-acid chain; its full sequence is Threonine--tRNA ligase (681 aa).

A TGS domain is found at 3 to 97 (KQIQVTLPDG…EEDVQLALLT (95 aa)). Positions 279 to 576 (DHRVLGKQLD…LIEHYAGAFP (298 aa)) are catalytic. The Zn(2+) site is built by cysteine 372, histidine 423, and histidine 553.

The protein belongs to the class-II aminoacyl-tRNA synthetase family. In terms of assembly, homodimer. It depends on Zn(2+) as a cofactor.

Its subcellular location is the cytoplasm. The catalysed reaction is tRNA(Thr) + L-threonine + ATP = L-threonyl-tRNA(Thr) + AMP + diphosphate + H(+). Its function is as follows. Catalyzes the attachment of threonine to tRNA(Thr) in a two-step reaction: L-threonine is first activated by ATP to form Thr-AMP and then transferred to the acceptor end of tRNA(Thr). Also edits incorrectly charged L-seryl-tRNA(Thr). The chain is Threonine--tRNA ligase from Acidobacterium capsulatum (strain ATCC 51196 / DSM 11244 / BCRC 80197 / JCM 7670 / NBRC 15755 / NCIMB 13165 / 161).